Reading from the N-terminus, the 397-residue chain is Phosphoglycerate kinase (397 aa).

Residues 21 to 23 (DFN), arginine 37, 60 to 63 (HLGR), arginine 120, and arginine 153 each bind substrate. ATP is bound by residues lysine 206, glycine 296, glutamate 327, and 353–356 (GGDS).

This sequence belongs to the phosphoglycerate kinase family. As to quaternary structure, monomer.

The protein localises to the cytoplasm. It catalyses the reaction (2R)-3-phosphoglycerate + ATP = (2R)-3-phospho-glyceroyl phosphate + ADP. Its pathway is carbohydrate degradation; glycolysis; pyruvate from D-glyceraldehyde 3-phosphate: step 2/5. The protein is Phosphoglycerate kinase of Rhodopirellula baltica (strain DSM 10527 / NCIMB 13988 / SH1).